The sequence spans 140 residues: Inner membrane protein YphA (140 aa).

Over Met-1–Arg-13 the chain is Cytoplasmic. Residues Pro-14–Pro-34 form a helical membrane-spanning segment. Residues Lys-35 to Leu-56 lie on the Periplasmic side of the membrane. The chain crosses the membrane as a helical span at residues Ala-57–Phe-77. Over Thr-78–Arg-79 the chain is Cytoplasmic. The chain crosses the membrane as a helical span at residues Pro-80–Trp-100. Over Asp-101–Lys-116 the chain is Periplasmic. A helical membrane pass occupies residues Asn-117 to Leu-137. Residues Asp-138–Arg-140 lie on the Cytoplasmic side of the membrane.

It belongs to the DoxX family.

The protein resides in the cell inner membrane. This Escherichia coli (strain K12) protein is Inner membrane protein YphA (yphA).